Reading from the N-terminus, the 558-residue chain is Kelch-like protein 23 (558 aa).

The BTB domain maps to Thr-36–Lys-104. Residues Cys-139–Gly-240 enclose the BACK domain. 6 Kelch repeats span residues Thr-274–Pro-320, Asn-321–Gly-369, Cys-370–Glu-416, Ile-418–Asn-466, Lys-467–Gly-508, and Ile-510–Asn-557.

The polypeptide is Kelch-like protein 23 (Klhl23) (Mus musculus (Mouse)).